Here is a 94-residue protein sequence, read N- to C-terminus: Integration host factor subunit beta (94 aa).

Belongs to the bacterial histone-like protein family. In terms of assembly, heterodimer of an alpha and a beta chain.

This protein is one of the two subunits of integration host factor, a specific DNA-binding protein that functions in genetic recombination as well as in transcriptional and translational control. The polypeptide is Integration host factor subunit beta (Citrobacter koseri (strain ATCC BAA-895 / CDC 4225-83 / SGSC4696)).